The sequence spans 209 residues: Dof zinc finger protein DOF1.6 (209 aa).

Positions Met-1–Thr-17 are enriched in polar residues. The disordered stretch occupies residues Met-1–Leu-29. Residues Tyr-20–Leu-29 are compositionally biased toward pro residues. The Dof-type zinc-finger motif lies at Leu-29 to Ser-83. Zn(2+)-binding residues include Cys-31, Cys-34, Cys-56, and Cys-59. The tract at residues Arg-70–Ser-116 is disordered. Over residues Phe-89–Ser-116 the composition is skewed to low complexity.

Its subcellular location is the nucleus. Its function is as follows. Transcription factor that binds specifically to a 5'-AA[AG]G-3' consensus core sequence. The sequence is that of Dof zinc finger protein DOF1.6 (DOF1.6) from Arabidopsis thaliana (Mouse-ear cress).